Here is a 230-residue protein sequence, read N- to C-terminus: Ion-translocating oxidoreductase complex subunit E (230 aa).

The next 6 helical transmembrane spans lie at 18 to 38 (ALVQ…ATNA), 39 to 59 (LGLG…VSAL), 63 to 83 (TPAE…VSAV), 86 to 106 (LINA…PLIV), 125 to 145 (WLSA…MFVL), and 182 to 202 (PFLL…MLAV).

The protein belongs to the NqrDE/RnfAE family. As to quaternary structure, the complex is composed of six subunits: RsxA, RsxB, RsxC, RsxD, RsxE and RsxG.

Its subcellular location is the cell inner membrane. Part of a membrane-bound complex that couples electron transfer with translocation of ions across the membrane. Required to maintain the reduced state of SoxR. The sequence is that of Ion-translocating oxidoreductase complex subunit E from Salmonella arizonae (strain ATCC BAA-731 / CDC346-86 / RSK2980).